The sequence spans 444 residues: Prenyltransferase phnF (444 aa).

The protein belongs to the tryptophan dimethylallyltransferase family.

The enzyme catalyses 2,3,4,7,9-pentahydroxy-6-methyl-1H-phenalen-1-one + dimethylallyl diphosphate = 2,4,7,9-tetrahydroxy-6-methyl-8-(2-methylbut-3-en-2-yl)-1-oxo-1H-phenalen-3-ol + diphosphate. The protein operates within secondary metabolite biosynthesis. Functionally, prenyltransferase; part of the gene cluster that mediates the biosynthesis of phenalenones such as herqueinone, compounds that have been reported to treat tumors, bacterial infections and/or mycoses, and rheumatic diseases. The non-reducing polyketide synthase phnA synthesizes the heptaketide backbone and cyclizes it into the angular, hemiketal-containing naphtho-gamma-pyrone prephenalenone. The product template (PT) domain of phnA catalyzes only the C4-C9 aldol condensation, which is unprecedented among known PT domains. The transformation of prephenalenone to phenalenones requires an FAD-dependent monooxygenase phnB, which catalyzes the C2 aromatic hydroxylation of prephenalenone and ring opening of the gamma-pyrone ring simultaneously. Subsequent intramolecular deprotonation of C3 phenolic oxygen accelerates phenalenone ring closure to yield the tricyclic phenalenone core with a C2 hydroxylation. The prenyltransferase phnF further catalyzes reverse C-prenylation of phenalenone by direct electrophilic substitution at C6, or possibly via first a forward O-prenylation of a neighboring phenol in phenalenone, followed by a Claisen rearrangement. The hydroalkoxylation enzyme phnH catalyzes the 5-exo-trig cyclization via acid catalysis after the spontaneous deprotonation of 7-OH, which leads to the formation of the dihydrobenzofuran atrovenetin. Atrovenetin is further converted to deoxyherqueinone by the O-methyltransferase phnC which can methylate C2-OH to stabilize the northern portion of the phenalenone core. Finally, the oxidoreductase phnG converts deoxyherqueinone to herqueinone via C6 hydroxylation. This Penicillium herquei protein is Prenyltransferase phnF.